Reading from the N-terminus, the 123-residue chain is WAP four-disulfide core domain protein 5 (123 aa).

A signal peptide spans 1 to 24; sequence MRIQSLLLLGALLAVGSQPPAAFG. WAP domains lie at 27–73 and 74–121; these read KGEK…CVPR and VSVK…RDPA. 8 disulfides stabilise this stretch: cysteine 34–cysteine 62, cysteine 41–cysteine 66, cysteine 49–cysteine 61, cysteine 55–cysteine 70, cysteine 81–cysteine 109, cysteine 88–cysteine 113, cysteine 96–cysteine 108, and cysteine 102–cysteine 117.

The protein resides in the secreted. Its function is as follows. Putative acid-stable proteinase inhibitor. This is WAP four-disulfide core domain protein 5 (WFDC5) from Saimiri boliviensis boliviensis (Bolivian squirrel monkey).